We begin with the raw amino-acid sequence, 126 residues long: Small ribosomal subunit protein uS13 (126 aa).

The disordered stretch occupies residues 92–126; it reads HRRGLPVRGQRTKTNARTRKGPRKTVAGKKKATRK.

This sequence belongs to the universal ribosomal protein uS13 family. As to quaternary structure, part of the 30S ribosomal subunit. Forms a loose heterodimer with protein S19. Forms two bridges to the 50S subunit in the 70S ribosome.

Located at the top of the head of the 30S subunit, it contacts several helices of the 16S rRNA. In the 70S ribosome it contacts the 23S rRNA (bridge B1a) and protein L5 of the 50S subunit (bridge B1b), connecting the 2 subunits; these bridges are implicated in subunit movement. Contacts the tRNAs in the A and P-sites. The sequence is that of Small ribosomal subunit protein uS13 from Deinococcus geothermalis (strain DSM 11300 / CIP 105573 / AG-3a).